Reading from the N-terminus, the 1036-residue chain is uncharacterized protein (1036 aa).

A signal peptide spans 1 to 24 (MKRVGLIGVIMAALLVISATPVMA). Residues 1011-1033 (GGGVPGFEAVFAIAGLLAVAYLL) traverse the membrane as a helical segment.

It localises to the membrane. This is an uncharacterized protein from Archaeoglobus fulgidus (strain ATCC 49558 / DSM 4304 / JCM 9628 / NBRC 100126 / VC-16).